Here is a 334-residue protein sequence, read N- to C-terminus: L-lactate dehydrogenase (334 aa).

The interval 1-22 is disordered; sequence MASTKGKLIHEMVPSKERDPPH. A compositionally biased stretch (basic and acidic residues) spans 8–22; that stretch reads LIHEMVPSKERDPPH. NAD(+) is bound by residues 31–59 and R101; that span reads GQVGMAAAISVLLRDLADELALVDVVEDR. Substrate-binding residues include R108, N140, and R171. N140 lines the NAD(+) pocket. H195 acts as the Proton acceptor in catalysis. T250 serves as a coordination point for substrate.

The protein belongs to the LDH/MDH superfamily. LDH family. Homotetramer.

It is found in the cytoplasm. It carries out the reaction (S)-lactate + NAD(+) = pyruvate + NADH + H(+). It participates in fermentation; pyruvate fermentation to lactate; (S)-lactate from pyruvate: step 1/1. This Petromyzon marinus (Sea lamprey) protein is L-lactate dehydrogenase.